A 94-amino-acid chain; its full sequence is MAVLTDEQVDAALHDLNGWQRAGGVLRRSIKFPTFMAGIDAVRRVAERAEEVNHHPDIDIRWRTVTFALVTHAVGGITENDIAMAHDIDAMFGA.

Belongs to the pterin-4-alpha-carbinolamine dehydratase family.

The catalysed reaction is (4aS,6R)-4a-hydroxy-L-erythro-5,6,7,8-tetrahydrobiopterin = (6R)-L-erythro-6,7-dihydrobiopterin + H2O. This is Putative pterin-4-alpha-carbinolamine dehydratase from Mycobacterium tuberculosis (strain ATCC 25177 / H37Ra).